Here is a 444-residue protein sequence, read N- to C-terminus: Serine carboxypeptidase-like 50 (444 aa).

An N-terminal signal peptide occupies residues 1–22 (MEQATTLFILLSTLLLAVSVES). Cysteine 79 and cysteine 308 are joined by a disulfide. Residue serine 170 is part of the active site. Asparagine 263 carries N-linked (GlcNAc...) asparagine glycosylation. The active site involves aspartate 345. The N-linked (GlcNAc...) asparagine glycan is linked to asparagine 361. Histidine 403 is an active-site residue.

This sequence belongs to the peptidase S10 family. Ubiquitous.

Its subcellular location is the secreted. In terms of biological role, probable carboxypeptidase. This Arabidopsis thaliana (Mouse-ear cress) protein is Serine carboxypeptidase-like 50 (SCPL50).